An 80-amino-acid polypeptide reads, in one-letter code: Lantibiotic Flvalpha.b (80 aa).

Positions 1–38 (MNKNPIYRSEEEAKNIACGNVAAELDENSQALDAINGA) are cleaved as a propeptide — cleaved by FlvT. Residues Thr43 and Thr47 each carry the 2,3-didehydrobutyrine; by FlvM1 modification. A cross-link (beta-methyllanthionine (Thr-Cys); by FlvM1) is located at residues 52–55 (TVGC). Residues 58–68 (SYGLGNGGYCC) constitute a cross-link (lanthionine (Ser-Cys); by FlvM1). 2 cross-links (beta-methyllanthionine (Thr-Cys); by FlvM1) span residues 69-74 (TYTVEC) and 71-78 (TVECSKTC).

Post-translationally, the lanthionine formed by Ser-58 and Cys-68 forms a putative lipid II binding motif. In terms of processing, maturation of FlvA1 peptides involves the enzymatic conversion of Thr, and Ser into dehydrated AA and the formation of thioether bonds with cysteines. Modifications are processed by the flavecin synthetase FlvM1. This is followed by membrane translocation and cleavage of the modified precursor. Contains DL-lanthionine and DL-beta-methyllanthionine, when coepressed in E.coli with the flavecin synthetase FlvM1.

The protein resides in the secreted. Its function is as follows. Lanthionine-containing peptide antibiotic (lantibiotic) only active on Gram-positive bacteria in synergy with Flvbeta peptides, which are encoded by the same operon than Flvalpha.a. Shows antibacterial activity in synergy with Flvbeta.b, Flvbeta.c, Flvbeta.e and Flvbeta.g. Does not show antibacterial activity when tested with Flvbeta.a, Flvbeta.d, Flvbeta.f and Flvbeta.h. The bactericidal activity of lantibiotics is based on depolarization of energized bacterial cytoplasmic membranes, initiated by the formation of aqueous transmembrane pores. This is Lantibiotic Flvalpha.b from Ruminococcus flavefaciens.